Reading from the N-terminus, the 155-residue chain is MSQVILDLQLACENHSGLPDEAQFQRWLDGVIPQFQEASEVTIRLVDEAESHDLNLTYRGKDKPTNVLSFPFEAPPGIEMPLLGDLIICRQVVEQEAQEQDKPLEAHWAHMVVHGSLHLLGYDHIDDDEAEEMESLETEIMLAMGYEDPYIAEKE.

Zn(2+) is bound by residues H114, H118, and H124.

Belongs to the endoribonuclease YbeY family. Zn(2+) serves as cofactor.

It is found in the cytoplasm. Single strand-specific metallo-endoribonuclease involved in late-stage 70S ribosome quality control and in maturation of the 3' terminus of the 16S rRNA. The protein is Endoribonuclease YbeY of Salmonella arizonae (strain ATCC BAA-731 / CDC346-86 / RSK2980).